The sequence spans 80 residues: Kappa-actitoxin-Avd4i (80 aa).

A signal peptide spans 1–19 (MNKALFLCLVVLCAAVVFA). Residues 20-31 (AEDLQKAKHAPF) constitute a propeptide that is removed on maturation. 3 disulfides stabilise this stretch: cysteine 41–cysteine 76, cysteine 43–cysteine 69, and cysteine 59–cysteine 77.

The protein belongs to the sea anemone type 3 (BDS) potassium channel toxin family. In terms of tissue distribution, weakly expressed in the ectodermal tissue from the distal and proximal tentacles, body wall, and oral disk.

It is found in the secreted. Its subcellular location is the nematocyst. Functionally, blocks Kv3 voltage-gated potassium channels. Reduces blood pressure. In Anemonia viridis (Snakelocks anemone), this protein is Kappa-actitoxin-Avd4i.